A 490-amino-acid polypeptide reads, in one-letter code: N-succinylglutamate 5-semialdehyde dehydrogenase (490 aa).

An NAD(+)-binding site is contributed by 223–228 (GSSRTG). Catalysis depends on residues E246 and C280.

This sequence belongs to the aldehyde dehydrogenase family. AstD subfamily.

The enzyme catalyses N-succinyl-L-glutamate 5-semialdehyde + NAD(+) + H2O = N-succinyl-L-glutamate + NADH + 2 H(+). The protein operates within amino-acid degradation; L-arginine degradation via AST pathway; L-glutamate and succinate from L-arginine: step 4/5. Functionally, catalyzes the NAD-dependent reduction of succinylglutamate semialdehyde into succinylglutamate. In Pseudoalteromonas atlantica (strain T6c / ATCC BAA-1087), this protein is N-succinylglutamate 5-semialdehyde dehydrogenase.